The sequence spans 392 residues: MSEKDNNLTPWQQKHLEYQKRKAEEAKKEKKANQPKKVHFSSPFLKSLPKTEKNFDDTRDEAESAELLEEGFETNNEETQSSEAPIENEKIIAQLEQLSQENEYEYEEEQIKRPSRFSSLFKGSAPLLKKMWPALAVVVLVFVGSLYLISPLSKISTFSVSGNANESSEQVALASGIQTSDSIFNILNNKEKIEATIEQKFPRISAVTINYHFPNRFEAIVKEHTNSVYVKRNNQTYLVLNNGYVITTPVDATKLEKLPVLQNFNDEEVKTFVNAYETLKPAIKSLMTNVTKTPTDATKDFIAIDMSDGNQVRVSLSQLADRLPYYPSVAKQVQAPQVVDMEAGIYTKPKAAYDAYLSQLSTSKSASISAQNAKKTDASSENTAQSTTTSSN.

The segment at 1-88 (MSEKDNNLTP…TQSSEAPIEN (88 aa)) is disordered. Topologically, residues 1 to 131 (MSEKDNNLTP…KGSAPLLKKM (131 aa)) are cytoplasmic. Residues 14 to 32 (KHLEYQKRKAEEAKKEKKA) show a composition bias toward basic and acidic residues. A compositionally biased stretch (acidic residues) spans 58–76 (TRDEAESAELLEEGFETNN). Residues 132 to 152 (WPALAVVVLVFVGSLYLISPL) form a helical membrane-spanning segment. Positions 153–224 (SKISTFSVSG…NRFEAIVKEH (72 aa)) constitute a POTRA domain. The Extracellular segment spans residues 153–392 (SKISTFSVSG…TAQSTTTSSN (240 aa)). The tract at residues 368–392 (ISAQNAKKTDASSENTAQSTTTSSN) is disordered.

Belongs to the FtsQ/DivIB family. DivIB subfamily.

The protein localises to the cell membrane. Its function is as follows. Cell division protein that may be involved in stabilizing or promoting the assembly of the division complex. The protein is Cell division protein DivIB of Lactococcus lactis subsp. lactis (strain KF147).